A 236-amino-acid polypeptide reads, in one-letter code: uncharacterized protein (236 aa).

The region spanning 4–225 (LLEASIEQAG…TGLEGQSLLD (222 aa)) is the ABC transporter domain. 38 to 45 (GANGAGKS) serves as a coordination point for ATP.

This sequence belongs to the ABC transporter superfamily.

This is an uncharacterized protein from Bacillus subtilis (strain 168).